The following is a 684-amino-acid chain: Beta-taxilin (684 aa).

Residues methionine 1–serine 26 are compositionally biased toward polar residues. Positions methionine 1–lysine 132 are disordered. A compositionally biased stretch (basic and acidic residues) spans proline 45–glutamate 64. A compositionally biased stretch (acidic residues) spans glutamate 93 to glutamate 107. 2 coiled-coil regions span residues lysine 135–glutamate 351 and asparagine 378–aspartate 467. The span at isoleucine 458 to aspartate 475 shows a compositional bias: basic and acidic residues. 3 disordered regions span residues isoleucine 458–aspartate 485, glutamate 514–alanine 632, and proline 646–aspartate 684. 2 positions are modified to phosphoserine: serine 474 and serine 483. A compositionally biased stretch (basic and acidic residues) spans glutamate 514–glutamine 524. The segment covering glutamine 613–serine 622 has biased composition (polar residues).

It belongs to the taxilin family. As to quaternary structure, binds to the C-terminal coiled coil region of syntaxin family members STX1A, STX3A and STX4A. Has a preference for STX1A. As to expression, expressed in skeletal muscle.

Promotes motor nerve regeneration. May be involved in intracellular vesicle traffic. The chain is Beta-taxilin (TXLNB) from Homo sapiens (Human).